The primary structure comprises 279 residues: Probable endonuclease 4 (279 aa).

Zn(2+)-binding residues include His67, His107, Glu144, Asp177, His180, His214, Asp227, His229, and Glu259.

The protein belongs to the AP endonuclease 2 family. Zn(2+) serves as cofactor.

The catalysed reaction is Endonucleolytic cleavage to 5'-phosphooligonucleotide end-products.. Functionally, endonuclease IV plays a role in DNA repair. It cleaves phosphodiester bonds at apurinic or apyrimidinic (AP) sites, generating a 3'-hydroxyl group and a 5'-terminal sugar phosphate. This Sulfurihydrogenibium sp. (strain YO3AOP1) protein is Probable endonuclease 4.